Here is a 110-residue protein sequence, read N- to C-terminus: Small ribosomal subunit protein eS24 (110 aa).

The segment at 91–110 (RNKVEEQAEEAEEAEAGAAE) is disordered. Over residues 97 to 110 (QAEEAEEAEAGAAE) the composition is skewed to acidic residues.

It belongs to the eukaryotic ribosomal protein eS24 family.

This chain is Small ribosomal subunit protein eS24, found in Archaeoglobus fulgidus (strain ATCC 49558 / DSM 4304 / JCM 9628 / NBRC 100126 / VC-16).